The chain runs to 195 residues: Cysteine/O-acetylserine efflux protein (195 aa).

At 1-9 the chain is on the periplasmic side; that stretch reads MTPMLLSAF. A helical membrane pass occupies residues 10-32; the sequence is WTYTLITALTPGPNNILALSAAT. Residues 33 to 46 lie on the Cytoplasmic side of the membrane; sequence AHGFRQSIRVLAGM. The helical transmembrane segment at 47-67 threads the bilayer; sequence SLGFLVVMLLCAGIAFSLAVI. Residues 68 to 69 are Periplasmic-facing; the sequence is DP. Residues 70-90 form a helical membrane-spanning segment; the sequence is AIIHLLSWVGAAYILWLAWKI. At 91–104 the chain is on the cytoplasmic side; the sequence is ATSPAADEKVRPKP. The chain crosses the membrane as a helical span at residues 105–125; sequence VGFWVSFGLQFVNVKIILYGI. Over 126 to 141 the chain is Periplasmic; that stretch reads TALSTFVLPQTQALNW. The chain crosses the membrane as a helical span at residues 142–162; sequence VIGVSILLALIGTFGNVCWAL. At 163-176 the chain is on the cytoplasmic side; that stretch reads AGHLFQRAFRHYGR. A helical membrane pass occupies residues 177–194; it reads QLNIILALLLVYCAVRIF. Residue Y195 is a topological domain, periplasmic.

This sequence belongs to the Rht family.

The protein localises to the cell inner membrane. It carries out the reaction O-acetyl-L-serine(in) = O-acetyl-L-serine(out). It catalyses the reaction L-cysteine(in) = L-cysteine(out). Exporter of O-acetylserine (OAS) and cysteine. This chain is Cysteine/O-acetylserine efflux protein (eamB), found in Salmonella paratyphi A (strain ATCC 9150 / SARB42).